Here is a 279-residue protein sequence, read N- to C-terminus: NADPH-dependent 7-cyano-7-deazaguanine reductase (279 aa).

86-88 (IES) provides a ligand contact to substrate. 88–89 (SK) lines the NADPH pocket. Cys-187 acts as the Thioimide intermediate in catalysis. Catalysis depends on Asp-194, which acts as the Proton donor. 226–227 (HE) is a substrate binding site. Position 255-256 (255-256 (RG)) interacts with NADPH.

This sequence belongs to the GTP cyclohydrolase I family. QueF type 2 subfamily. Homodimer.

The protein localises to the cytoplasm. The catalysed reaction is 7-aminomethyl-7-carbaguanine + 2 NADP(+) = 7-cyano-7-deazaguanine + 2 NADPH + 3 H(+). Its pathway is tRNA modification; tRNA-queuosine biosynthesis. Functionally, catalyzes the NADPH-dependent reduction of 7-cyano-7-deazaguanine (preQ0) to 7-aminomethyl-7-deazaguanine (preQ1). The chain is NADPH-dependent 7-cyano-7-deazaguanine reductase from Haemophilus influenzae (strain ATCC 51907 / DSM 11121 / KW20 / Rd).